A 130-amino-acid polypeptide reads, in one-letter code: Sulfurtransferase TusD (130 aa).

C80 functions as the Cysteine persulfide intermediate in the catalytic mechanism.

It belongs to the DsrE/TusD family. Heterohexamer, formed by a dimer of trimers. The hexameric TusBCD complex contains 2 copies each of TusB, TusC and TusD. The TusBCD complex interacts with TusE.

It localises to the cytoplasm. In terms of biological role, part of a sulfur-relay system required for 2-thiolation of 5-methylaminomethyl-2-thiouridine (mnm(5)s(2)U) at tRNA wobble positions. Accepts sulfur from TusA and transfers it in turn to TusE. The polypeptide is Sulfurtransferase TusD (Proteus mirabilis (strain HI4320)).